The following is a 322-amino-acid chain: uncharacterized protein (322 aa).

5 consecutive transmembrane segments (helical) span residues 159 to 179 (GIIF…MLYL), 203 to 223 (MNIP…YIWL), 234 to 254 (GGIL…RVGL), 267 to 287 (FEGS…LIPY), and 296 to 316 (TLLS…FFAW).

It localises to the membrane. This is an uncharacterized protein from Dictyostelium discoideum (Social amoeba).